A 580-amino-acid polypeptide reads, in one-letter code: Laccase-5 (580 aa).

The first 25 residues, 1-25 (MDVTKSLLCFISFVAFLLFSSVAEA), serve as a signal peptide directing secretion. Plastocyanin-like domains are found at residues 34–150 (IIQA…PPAG) and 160–312 (RNVP…YKSA). A glycan (N-linked (GlcNAc...) asparagine) is linked at Asn-80. Residues His-84, His-86, His-129, and His-131 each contribute to the Cu cation site. Residues Asn-189, Asn-300, Asn-340, Asn-392, Asn-402, Asn-410, and Asn-443 are each glycosylated (N-linked (GlcNAc...) asparagine). Residues 428–564 (DFPAKPPVKF…AMAFLVENGN (137 aa)) enclose the Plastocyanin-like 3 domain. Cu cation is bound by residues His-481, His-484, His-486, His-543, Cys-544, His-545, and His-549.

This sequence belongs to the multicopper oxidase family. Cu cation is required as a cofactor. In terms of tissue distribution, ubiquitous and constitutive.

Its subcellular location is the secreted. The protein localises to the extracellular space. It localises to the apoplast. The enzyme catalyses 4 hydroquinone + O2 = 4 benzosemiquinone + 2 H2O. Lignin degradation and detoxification of lignin-derived products. The polypeptide is Laccase-5 (LAC5) (Arabidopsis thaliana (Mouse-ear cress)).